Reading from the N-terminus, the 617-residue chain is Elongation factor 4 (617 aa).

Positions 17 to 198 (AIIRNFCIIA…KIVRDLPAPV (182 aa)) constitute a tr-type G domain. Residues 29-34 (DHGKST) and 145-148 (NKID) each bind GTP.

This sequence belongs to the TRAFAC class translation factor GTPase superfamily. Classic translation factor GTPase family. LepA subfamily.

The protein localises to the cell membrane. The catalysed reaction is GTP + H2O = GDP + phosphate + H(+). Its function is as follows. Required for accurate and efficient protein synthesis under certain stress conditions. May act as a fidelity factor of the translation reaction, by catalyzing a one-codon backward translocation of tRNAs on improperly translocated ribosomes. Back-translocation proceeds from a post-translocation (POST) complex to a pre-translocation (PRE) complex, thus giving elongation factor G a second chance to translocate the tRNAs correctly. Binds to ribosomes in a GTP-dependent manner. This chain is Elongation factor 4, found in Paenarthrobacter aurescens (strain TC1).